Reading from the N-terminus, the 491-residue chain is Lysosomal Pro-X carboxypeptidase (491 aa).

A signal peptide spans 1–17 (MGCRALLLLSFLLLGAA). Positions 18–43 (TTIPPRLKTLGSPHLSASPTPDPAVA) are excised as a propeptide. N-linked (GlcNAc...) asparagine glycosylation occurs at N99. S177 functions as the Charge relay system in the catalytic mechanism. The segment at 192–332 (HIVVGALAAS…QNIFQALSVY (141 aa)) is SKS domain. 4 disulfides stabilise this stretch: C213–C370, C231–C308, C262–C341, and C362–C392. N-linked (GlcNAc...) asparagine glycans are attached at residues N315, N334, and N343. A glycan (N-linked (GlcNAc...) asparagine) is linked at N413. Residues D428 and H453 each act as charge relay system in the active site.

It belongs to the peptidase S28 family. Homodimer.

The protein localises to the lysosome. It carries out the reaction Cleavage of a -Pro-|-Xaa bond to release a C-terminal amino acid.. Cleaves C-terminal amino acids linked to proline in peptides such as angiotensin II, III and des-Arg9-bradykinin. This cleavage occurs at acidic pH, but enzymatic activity is retained with some substrates at neutral pH. The chain is Lysosomal Pro-X carboxypeptidase (Prcp) from Mus musculus (Mouse).